The sequence spans 1662 residues: Cortactin-binding protein 2 (1662 aa).

5 disordered regions span residues 1–23 (MATD…AGAA), 203–222 (KKKT…RSTE), 361–440 (SHSD…LHPG), 454–479 (GNAN…PTSR), and 498–618 (RFTS…PSID). Residues 119 to 276 (KKMQERMSAQ…EQLKRGSDSK (158 aa)) adopt a coiled-coil conformation. Residues 386–396 (PSTDSTPDPTS) show a composition bias toward low complexity. The span at 411 to 422 (QTPGIAPQNSQA) shows a compositional bias: polar residues. Arg-498 is subject to Asymmetric dimethylarginine. The segment covering 583–597 (TVASPPSSLPQGNRV) has biased composition (polar residues). ANK repeat units follow at residues 709 to 739 (GRPT…DINY), 743 to 772 (DGHS…QINA), 776 to 805 (NGFT…NINH), 809 to 838 (GGQT…NRSV), 842 to 871 (DGWT…PACG), and 912 to 942 (EGWT…EPER). A disordered region spans residues 1450–1474 (GESGAWRKVNTSPRRKSGRFSLPTW). Ser-1524 is modified (phosphoserine). Disordered stretches follow at residues 1580–1602 (SQKE…KSKT) and 1618–1662 (SKVT…KPNK). Residues 1582 to 1599 (KEVSPLSSHQTTECSNSK) are compositionally biased toward polar residues. Residues 1624–1638 (SQNTKRSSSSSNTRQ) show a composition bias toward low complexity. Over residues 1639-1648 (IEINNNSKEN) the composition is skewed to polar residues. Residues 1649–1662 (WNLHKNEHLDKPNK) show a composition bias toward basic and acidic residues.

In terms of assembly, interacts with CTTN/cortactin SH3 domain. Interacts with STRN, STRN4/zinedin and MOB4/phocein; this interactions mediate the association with the STRIPAK core complex and may regulate dendritic spine distribution of the STRIPAK complex in hippocampal neurons. Activation of glutamate receptors weakens the interaction with STRN and STRN4.

Its subcellular location is the cytoplasm. The protein resides in the cell cortex. It is found in the cell projection. The protein localises to the dendritic spine. Functionally, regulates the dendritic spine distribution of CTTN/cortactin in hippocampal neurons, and thus controls dendritic spinogenesis and dendritic spine maintenance. Associates with the striatin-interacting phosphatase and kinase (STRIPAK) core complex to regulate dendritic spine distribution of the STRIPAK complex in hippocampal neurons. In Chlorocebus aethiops (Green monkey), this protein is Cortactin-binding protein 2 (CTTNBP2).